Here is a 72-residue protein sequence, read N- to C-terminus: ATP synthase subunit c (72 aa).

2 helical membrane passes run 1-21 (MSLG…GAGI) and 48-68 (MFIG…FSFI).

It belongs to the ATPase C chain family. F-type ATPases have 2 components, F(1) - the catalytic core - and F(0) - the membrane proton channel. F(1) has five subunits: alpha(3), beta(3), gamma(1), delta(1), epsilon(1). F(0) has three main subunits: a(1), b(2) and c(10-14). The alpha and beta chains form an alternating ring which encloses part of the gamma chain. F(1) is attached to F(0) by a central stalk formed by the gamma and epsilon chains, while a peripheral stalk is formed by the delta and b chains.

Its subcellular location is the cell membrane. In terms of biological role, f(1)F(0) ATP synthase produces ATP from ADP in the presence of a proton or sodium gradient. F-type ATPases consist of two structural domains, F(1) containing the extramembraneous catalytic core and F(0) containing the membrane proton channel, linked together by a central stalk and a peripheral stalk. During catalysis, ATP synthesis in the catalytic domain of F(1) is coupled via a rotary mechanism of the central stalk subunits to proton translocation. Key component of the F(0) channel; it plays a direct role in translocation across the membrane. A homomeric c-ring of between 10-14 subunits forms the central stalk rotor element with the F(1) delta and epsilon subunits. The polypeptide is ATP synthase subunit c (Geobacillus stearothermophilus (Bacillus stearothermophilus)).